Reading from the N-terminus, the 784-residue chain is ATP-dependent 6-phosphofructokinase, platelet type (784 aa).

Met-1 carries the post-translational modification N-acetylmethionine. Residues 1 to 398 form an N-terminal catalytic PFK domain 1 region; it reads MSDLDSSSSS…NLNTYKRLAI (398 aa). Residues Ser-2, Ser-6, and Ser-20 each carry the phosphoserine modification. ATP-binding positions include Gly-33, 96-97, and 126-129; these read RC and GDGS. Asp-127 is a binding site for Mg(2+). Ser-141 bears the Phosphoserine mark. Residues 172-174, Arg-209, 216-218, Glu-272, Arg-300, and 306-309 contribute to the substrate site; these read SID, MGR, and HVQR. Residue Asp-174 is the Proton acceptor of the active site. Lys-394 is subject to N6-acetyllysine. An interdomain linker region spans residues 399–410; the sequence is KLPDEKIVKSNC. The C-terminal regulatory PFK domain 2 stretch occupies residues 411–784; sequence NVAVINVGAP…LESLQHHEEL (374 aa). Arg-480 lines the beta-D-fructose 2,6-bisphosphate pocket. The residue at position 485 (Lys-485) is an N6-acetyllysine. Residues 537–541, Arg-575, 582–584, and Glu-638 contribute to the beta-D-fructose 2,6-bisphosphate site; these read TVSNN and MGG. Residue Ser-539 is glycosylated (O-linked (GlcNAc) serine). The residue at position 650 (Tyr-650) is a Phosphotyrosine. Residues Arg-664 and 670 to 673 contribute to the beta-D-fructose 2,6-bisphosphate site; that span reads HMQQ. Residue Lys-687 is modified to N6-acetyllysine. Arg-743 contributes to the beta-D-fructose 2,6-bisphosphate binding site.

The protein belongs to the phosphofructokinase type A (PFKA) family. ATP-dependent PFK group I subfamily. Eukaryotic two domain clade 'E' sub-subfamily. Homo- and heterotetramers. Phosphofructokinase (PFK) enzyme functions as a tetramer composed of different combinations of 3 types of subunits, called PFKM (M), PFKL (L) and PFKP (P). The composition of the PFK tetramer differs according to the tissue type it is present in. The kinetic and regulatory properties of the tetrameric enzyme are dependent on the subunit composition, hence can vary across tissues. Interacts with ATG4B; promoting phosphorylation of ATG4B. The cofactor is Mg(2+). In terms of processing, glcNAcylation decreases enzyme activity. As to expression, expression is constant during tumor growth and markedly decreases when cell proliferation stops.

It localises to the cytoplasm. The enzyme catalyses beta-D-fructose 6-phosphate + ATP = beta-D-fructose 1,6-bisphosphate + ADP + H(+). Its pathway is carbohydrate degradation; glycolysis; D-glyceraldehyde 3-phosphate and glycerone phosphate from D-glucose: step 3/4. With respect to regulation, allosterically activated by ADP, AMP, or fructose 2,6-bisphosphate, and allosterically inhibited by ATP or citrate. Catalyzes the phosphorylation of D-fructose 6-phosphate to fructose 1,6-bisphosphate by ATP, the first committing step of glycolysis. This Mus musculus (Mouse) protein is ATP-dependent 6-phosphofructokinase, platelet type (Pfkp).